Consider the following 209-residue polypeptide: Cytochrome bo(3) ubiquinol oxidase subunit 3 (209 aa).

The Cytoplasmic portion of the chain corresponds to 1–29 (MSTAVLNKHLADAHEVGHDHDHAHDSGGN). A helical membrane pass occupies residues 30 to 50 (TVFGFWLYLMTDCVLFASVFA). Residues 51 to 72 (TYAVLVHHTAGGPSGKDIFELP) lie on the Periplasmic side of the membrane. The helical transmembrane segment at 73-93 (YVLVETAILLVSSCTYGLAML) threads the bilayer. Topologically, residues 94-102 (SAHKGAKGQ) are cytoplasmic. The helical transmembrane segment at 103–123 (AIAWLGVTFLLGAAFIGMEIN) threads the bilayer. At 124–143 (EFHHLIAEGFGPSRSAFLSS) the chain is on the periplasmic side. The chain crosses the membrane as a helical span at residues 144–164 (FFTLVGMHGLHVSAGLLWMLV). The Cytoplasmic segment spans residues 165–186 (LMAQIWTRGLTAQNNTRMMCLS). Residues 187-207 (LFWHFLDIVWICVFTVVYLMG) traverse the membrane as a helical segment. Topologically, residues 208 to 209 (AL) are periplasmic.

It belongs to the cytochrome c oxidase subunit 3 family. In terms of assembly, heterooctamer of two A chains, two B chains, two C chains and two D chains.

The protein resides in the cell inner membrane. Its function is as follows. Cytochrome bo(3) ubiquinol terminal oxidase is the component of the aerobic respiratory chain of E.coli that predominates when cells are grown at high aeration. Has proton pump activity across the membrane in addition to electron transfer, pumping 2 protons/electron. The polypeptide is Cytochrome bo(3) ubiquinol oxidase subunit 3 (cyoC) (Pseudomonas aeruginosa (strain ATCC 15692 / DSM 22644 / CIP 104116 / JCM 14847 / LMG 12228 / 1C / PRS 101 / PAO1)).